The sequence spans 195 residues: ATP-dependent Clp protease proteolytic subunit (195 aa).

The active-site Nucleophile is S98. The active site involves H123.

It belongs to the peptidase S14 family. In terms of assembly, fourteen ClpP subunits assemble into 2 heptameric rings which stack back to back to give a disk-like structure with a central cavity, resembling the structure of eukaryotic proteasomes.

It localises to the cytoplasm. It catalyses the reaction Hydrolysis of proteins to small peptides in the presence of ATP and magnesium. alpha-casein is the usual test substrate. In the absence of ATP, only oligopeptides shorter than five residues are hydrolyzed (such as succinyl-Leu-Tyr-|-NHMec, and Leu-Tyr-Leu-|-Tyr-Trp, in which cleavage of the -Tyr-|-Leu- and -Tyr-|-Trp bonds also occurs).. Its function is as follows. Cleaves peptides in various proteins in a process that requires ATP hydrolysis. Has a chymotrypsin-like activity. Plays a major role in the degradation of misfolded proteins. The sequence is that of ATP-dependent Clp protease proteolytic subunit from Wolinella succinogenes (strain ATCC 29543 / DSM 1740 / CCUG 13145 / JCM 31913 / LMG 7466 / NCTC 11488 / FDC 602W) (Vibrio succinogenes).